Consider the following 457-residue polypeptide: Methanethiol oxidase (457 aa).

This sequence belongs to the selenium-binding protein family.

The protein resides in the nucleus. It localises to the cytoplasm. The protein localises to the cytosol. It is found in the membrane. The enzyme catalyses methanethiol + O2 + H2O = hydrogen sulfide + formaldehyde + H2O2 + H(+). Its pathway is organosulfur degradation. Functionally, catalyzes the oxidation of methanethiol, an organosulfur compound known to be produced in substantial amounts by gut bacteria. Selenium-binding protein which may be involved in the sensing of reactive xenobiotics in the cytoplasm. May be involved in intra-Golgi protein transport. In Danio rerio (Zebrafish), this protein is Methanethiol oxidase (selenbp1).